Reading from the N-terminus, the 253-residue chain is Ribonuclease PH (253 aa).

Residues R86 and 124-126 (GTR) each bind phosphate.

Belongs to the RNase PH family. As to quaternary structure, homohexameric ring arranged as a trimer of dimers.

The enzyme catalyses tRNA(n+1) + phosphate = tRNA(n) + a ribonucleoside 5'-diphosphate. Its function is as follows. Phosphorolytic 3'-5' exoribonuclease that plays an important role in tRNA 3'-end maturation. Removes nucleotide residues following the 3'-CCA terminus of tRNAs; can also add nucleotides to the ends of RNA molecules by using nucleoside diphosphates as substrates, but this may not be physiologically important. Probably plays a role in initiation of 16S rRNA degradation (leading to ribosome degradation) during starvation. This chain is Ribonuclease PH, found in Brevibacillus brevis (strain 47 / JCM 6285 / NBRC 100599).